We begin with the raw amino-acid sequence, 837 residues long: Vacuolar membrane protease (837 aa).

The Cytoplasmic segment spans residues 1-36 (MSEEEVHDTSSEASEVFTNQPNAFVRGVRSIFGYRK). A helical transmembrane segment spans residues 37–57 (TSLTLFVILTIVVTAGLSFYD). Residues 58-355 (NSLELTIELP…FATPISALAR (298 aa)) lie on the Vacuolar side of the membrane. The N-linked (GlcNAc...) asparagine glycan is linked to N143. Residues H157 and D169 each contribute to the Zn(2+) site. E201 (proton acceptor) is an active-site residue. 3 residues coordinate Zn(2+): E202, E227, and H299. The chain crosses the membrane as a helical span at residues 356-376 (VNLVLLVLFPVVSTPLLFVIV). At 377-384 (KYKKWKLR) the chain is on the cytoplasmic side. A helical membrane pass occupies residues 385 to 405 (VTNFLGVPLAMGLAVAVGQVG). Over 406-415 (NPMLVSSHPM) the chain is Vacuolar. The chain crosses the membrane as a helical span at residues 416–436 (MVVATTTSIVVLVYYVVLNGV). Topologically, residues 437–446 (DWVNTSSDQK) are cytoplasmic. Residues 447 to 467 (LVTMIEVSFVYWVVLVYVTWS) form a helical membrane-spanning segment. Topologically, residues 468–474 (GGDHTGE) are vacuolar. Residues 475–495 (FGVTVLFFVQASTSLLGLIGW) form a helical membrane-spanning segment. Residues 496–539 (TFTRVRGGDEPLLSGEEERYGTEDERDTEKPLVEHNYDWSLQYL) lie on the Cytoplasmic side of the membrane. Residues 540–560 (LIVPVSSLVVYNSGWLVLEGV) traverse the membrane as a helical segment. N-linked (GlcNAc...) asparagine glycosylation occurs at N561. At 561–572 (NKTVQESLASEH) the chain is on the vacuolar side. A helical transmembrane segment spans residues 573–593 (LIYWIVVVFSQFLVLPVVPFI). Topologically, residues 594 to 598 (TKFNR) are cytoplasmic. Residues 599 to 619 (YIVLGLSVVAVVGVLMSMAVH) traverse the membrane as a helical segment. At 620-837 (PFNQGSPMKL…LVGVVKHVDV (218 aa)) the chain is on the vacuolar side. N689 carries an N-linked (GlcNAc...) asparagine glycan.

Belongs to the peptidase M28 family. The cofactor is Zn(2+).

It is found in the vacuole membrane. In terms of biological role, may be involved in vacuolar sorting and osmoregulation. This Candida albicans (strain WO-1) (Yeast) protein is Vacuolar membrane protease.